We begin with the raw amino-acid sequence, 215 residues long: Large ribosomal subunit protein uL3 (215 aa).

The tract at residues Gly-136 to Lys-155 is disordered. N5-methylglutamine is present on Gln-151.

This sequence belongs to the universal ribosomal protein uL3 family. As to quaternary structure, part of the 50S ribosomal subunit. Forms a cluster with proteins L14 and L19. Post-translationally, methylated by PrmB.

Its function is as follows. One of the primary rRNA binding proteins, it binds directly near the 3'-end of the 23S rRNA, where it nucleates assembly of the 50S subunit. In Rickettsia typhi (strain ATCC VR-144 / Wilmington), this protein is Large ribosomal subunit protein uL3.